A 355-amino-acid chain; its full sequence is 3-dehydroquinate synthase (355 aa).

Residues 66 to 71 (SGETTK), 100 to 104 (GATGD), 124 to 125 (TT), Lys136, Lys145, and 163 to 166 (FLET) each bind NAD(+). Zn(2+) is bound by residues Glu178, His242, and His256.

Belongs to the sugar phosphate cyclases superfamily. Dehydroquinate synthase family. Requires Co(2+) as cofactor. It depends on Zn(2+) as a cofactor. NAD(+) serves as cofactor.

It is found in the cytoplasm. It catalyses the reaction 7-phospho-2-dehydro-3-deoxy-D-arabino-heptonate = 3-dehydroquinate + phosphate. It functions in the pathway metabolic intermediate biosynthesis; chorismate biosynthesis; chorismate from D-erythrose 4-phosphate and phosphoenolpyruvate: step 2/7. Its function is as follows. Catalyzes the conversion of 3-deoxy-D-arabino-heptulosonate 7-phosphate (DAHP) to dehydroquinate (DHQ). The sequence is that of 3-dehydroquinate synthase from Staphylococcus saprophyticus subsp. saprophyticus (strain ATCC 15305 / DSM 20229 / NCIMB 8711 / NCTC 7292 / S-41).